A 199-amino-acid chain; its full sequence is Transgelin-3 (199 aa).

The region spanning 24–136 (ADLENKLVDW…RTLMALGSVA (113 aa)) is the Calponin-homology (CH) domain. At Ser-163 the chain carries Phosphoserine. A Calponin-like repeat occupies 174 to 199 (IGLQMGSNKGASQAGMTGYGMPRQIM). Over residues 176-188 (LQMGSNKGASQAG) the composition is skewed to polar residues. Residues 176 to 199 (LQMGSNKGASQAGMTGYGMPRQIM) form a disordered region.

Belongs to the calponin family. In terms of tissue distribution, widely expressed in the brain. Expression is increased in the superior frontal cortex of alcoholics, but not in the motor cortex or cerebellum.

The chain is Transgelin-3 (TAGLN3) from Homo sapiens (Human).